The following is a 395-amino-acid chain: MLSEALLVSAPGKVILHGEHAVVHGKVALAAALNLRTFLLLRPQSNGKVSVNLPNIGIKQVWDVGMLQRLDTSFLEQGDVSVPTLEQLEKLKKMGDLPRDRAGNEGMALLAFLYLYLAICRKQRTLPSLDMVVWSELPPGAGLGSSAAYSVCLAAALLTACEEVSNPLKDGVSVSRWPEEDLKSINKWAFEGERVIHGNPSGVDNAVSTWGGALRFQQGTMSSLKSLPSLQILLTNTKVPRSTKALVAAVRSRLTKFPEIVAPLLTSIDAISLECERVLGEMVAAPVPEQYLVLEELIDMNQHHLNALGVGHNSLDQLCQVTAAHGLHSKLTGAGGGGCGITLLKPGLEQATVEAAKQALTSCGFDCWETSIGAPGVSTHSAAAVGDPVRQALGL.

ATP contacts are provided by residues K13, N55, N104, S135, and 140-146 (GAGLGSS). S146 acts as the Proton donor in catalysis. S146 and E193 together coordinate Mg(2+). D204 serves as the catalytic Proton acceptor.

It belongs to the GHMP kinase family. Mevalonate kinase subfamily. As to quaternary structure, homodimer. Mg(2+) is required as a cofactor.

It localises to the cytoplasm. The protein resides in the peroxisome. It catalyses the reaction (R)-mevalonate + ATP = (R)-5-phosphomevalonate + ADP + H(+). Its pathway is isoprenoid biosynthesis; isopentenyl diphosphate biosynthesis via mevalonate pathway; isopentenyl diphosphate from (R)-mevalonate: step 1/3. Farnesyl pyrophosphate and geranyl pyrophosphate inhibit mevalonate kinase activity by binding competitively at the ATP-binding sites. Catalyzes the phosphorylation of mevalonate to mevalonate 5-phosphate, a key step in isoprenoid and cholesterol biosynthesis. The sequence is that of Mevalonate kinase from Mus musculus (Mouse).